A 319-amino-acid chain; its full sequence is MDIVQILSIIVPATLVYAAPLILTALGGVFSERSGVVNIGLEGLMIIGAFTSVLFNLFFGQELGAAAPWLSLLAAMAAGALFSLIHAAAAISFRADQTVSGVAINMLALGATLFIVKLIYGKAQTDKIPEPFYKTKIPGLGDIPVLGKIFFSDVYYTSILAIALAFISWFILFKTPFGLRIRSVGEHPMAADTMGINVYKMRYIGVMISGLFGGLGGGVYASTIALDFTHSTISGQGFIALAALVFGKWHPIGALGAALFFGFAQSLSIIGSLLPLFKDIPNVYMLMAPYILTILALTGFIGRADAPKANGVPYIKGKR.

A run of 9 helical transmembrane segments spans residues 6–26, 39–59, 65–85, 99–119, 159–179, 204–224, 235–255, 257–277, and 282–302; these read ILSIIVPATLVYAAPLILTAL, IGLEGLMIIGAFTSVLFNLFF, AAAPWLSLLAAMAAGALFSLI, VSGVAINMLALGATLFIVKLI, ILAIALAFISWFILFKTPFGL, IGVMISGLFGGLGGGVYASTI, GQGFIALAALVFGKWHPIGAL, AALFFGFAQSLSIIGSLLPLF, and NVYMLMAPYILTILALTGFIG.

The protein belongs to the binding-protein-dependent transport system permease family. In terms of assembly, the complex is composed of two ATP-binding proteins (NupO), two transmembrane proteins (NupP and NupQ) and a solute-binding protein (NupN).

Its subcellular location is the cell membrane. Functionally, part of an ABC transporter complex involved in the uptake of guanosine. Responsible for the translocation of the substrate across the membrane. May be a nucleoside transporter of broad specificity but with various affinities for different substrates. The chain is Guanosine ABC transporter permease protein NupQ from Bacillus subtilis (strain 168).